Consider the following 445-residue polypeptide: MMMLITMKSTVLLSVFTVLATWAGLLEAHPLGDTSDASKLSSDYSLPDLINARKVPNNWQTGEQASLEEGRIVLTSKQNSKGSLWLKQGFDLKDSFTMEWTFRSVGYSGQTDGGISFWFVQDSNVPRDKQLYNGPVNYDGLQLLVDNNGPLGPTLRGQLNDGQKPVDKTKIYDQSFASCLMGYQDSSVPSTIRVTYDLEDDNLLKVQVDNKVCFQTRKVRFPSGSYRIGVTAQNGAVNNNAESFEIFKMQFFNGVIEDSLIPNVNAMGQPKLITKYIDQQTGKEKLIEKTAFDADKDKITNYELYKKLDRVEGKILANDINALETKLNDVIKVQQELLSFMTTITKQLSSKPPANNEKGTSTDDAIAEDKENFKDFLSINQKLEKVLVEQEKYREATKRHGQDGPQVDEIARKLMIWLLPLIFIMLVMAYYTFRIRQEIIKTKLL.

A signal peptide spans 1-28 (MMMLITMKSTVLLSVFTVLATWAGLLEA). The Lumenal portion of the chain corresponds to 29 to 412 (HPLGDTSDAS…DGPQVDEIAR (384 aa)). Positions 36-254 (DASKLSSDYS…EIFKMQFFNG (219 aa)) constitute an L-type lectin-like domain. Cysteine 179 and cysteine 213 form a disulfide bridge. The helical transmembrane segment at 413–433 (KLMIWLLPLIFIMLVMAYYTF) threads the bilayer. The tract at residues 430 to 433 (YYTF) is mediates the interactions with COPI and COPII coat complexes. At 434 to 445 (RIRQEIIKTKLL) the chain is on the cytoplasmic side. A Di-lysine motif motif is present at residues 441-445 (KTKLL).

Belongs to the EMP46/EMP47 family. As to quaternary structure, homooligomers. Interacts with EMP46 in the endoplasmic reticulum membrane. Interacts with the coatomer proteins COP1, SEC21 and SEC23.

The protein localises to the golgi apparatus membrane. The protein resides in the endoplasmic reticulum membrane. Its function is as follows. Involved in the secretion of glycoproteins and in nucleus architecture and gene silencing. Required for the endoplasmic reticulum exit of EMP46. This chain is Protein EMP47 (EMP47), found in Saccharomyces cerevisiae (strain ATCC 204508 / S288c) (Baker's yeast).